We begin with the raw amino-acid sequence, 90 residues long: Kunitz-type serine protease inhibitor B5 (90 aa).

The first 24 residues, 1-24 (MSSGGLLLLLGLLTLWAELTPISG), serve as a signal peptide directing secretion. A BPTI/Kunitz inhibitor domain is found at 31 to 81 (CYLPADPGECLAHMRSFYYDSESKKCKEFIYGGCHGNANKFPSRDKCRQTC). Cystine bridges form between cysteine 31–cysteine 81, cysteine 40–cysteine 64, and cysteine 56–cysteine 77. Positions 85–90 (AKGRPT) are excised as a propeptide.

The protein belongs to the venom Kunitz-type family. As to expression, expressed by the venom gland.

The protein resides in the secreted. In terms of biological role, serine protease inhibitor. This chain is Kunitz-type serine protease inhibitor B5, found in Daboia siamensis (Eastern Russel's viper).